Here is a 441-residue protein sequence, read N- to C-terminus: uncharacterized protein (441 aa).

Helical transmembrane passes span 21-41 (VVVALTFSAIVGGLVAGMSLG), 51-71 (LGGGATIALSYAMLGTFAVAI), 94-114 (AASTTGLKYAVLVALVLVTMS), 118-138 (VIPVHIAFIPILIPPLLGVFA), 150-170 (VLTFGLITPYMVLPVGFGGIF), 195-215 (AMLLPGAGMIFGLLLAIFVSY), 239-259 (QHILVAALGIIAALGVQLYTG), 260-280 (SMIIGALAGFMVFTFGGVIAW), 291-311 (VHMMAMIGFIMIAAAGFAAVM), 334-354 (LAALLMLVVGLLVTMGIGSSF), 363-383 (IYVPLSLAFGFSPMATIALVG), and 419-439 (VVPTFIHYNIPLIIFGWIAAM).

The protein localises to the cell membrane. This is an uncharacterized protein from Vibrio parahaemolyticus serotype O3:K6 (strain RIMD 2210633).